Consider the following 65-residue polypeptide: MGTRKFFLLHHDKIIRSIIMANGIKNYWQDDGRFDRCSEIFFLSQKQGRGLYRFWLGNKKQGNRD.

Its function is as follows. Probably facilitates nickel incorporation. May constitute a multicomponent high-affinity nickel transporter. Not essential for the expression of catalytically active urease. This Bacillus sp. (strain TB-90) protein is Urease accessory protein UreI (ureI).